Reading from the N-terminus, the 54-residue chain is Ovomucoid (54 aa).

In terms of domain architecture, Kazal-like spans 4-54; the sequence is VNCSDYPKPVCSLLYMPLCGSDNKTYGNKCNFCNAVADSNGTLTLSHFGKC. Cystine bridges form between Cys6-Cys36, Cys14-Cys33, and Cys22-Cys54. N-linked (GlcNAc...) asparagine glycosylation occurs at Asn43.

It localises to the secreted. The chain is Ovomucoid from Geococcyx californianus (Greater roadrunner).